The sequence spans 549 residues: Movement protein Hsp70h (549 aa).

The protein belongs to the heat shock protein 70 family.

The protein localises to the virion. In terms of biological role, transports viral genome to neighboring plant cells directly through plasmosdesmata, without any budding. The movement protein allows efficient cell to cell propagation, by bypassing the host cell wall barrier. Two movement proteins, p6, Hsp70h and three structural proteins, CP, CPm, and P64 are essential for cell-cell movement. Also plays a role in virion formation. Together with CPm and p64, encapsidates the 5'-terminal portion of the viral genome. This is Movement protein Hsp70h from Vitis vinifera (Grape).